The primary structure comprises 649 residues: Exolysin (649 aa).

Residues 37-57 (LIYTIIVLVVAAVVGLVIFIV) traverse the membrane as a helical segment. A coiled-coil region spans residues 184-268 (KDIIDNKLRE…KKATDDFKKK (85 aa)). Basic and acidic residues predominate over residues 258–275 (AKKATDDFKKKKQADKNK). Residues 258–325 (AKKATDDFKK…QFQTRDSKGQ (68 aa)) form a disordered region. The span at 278–312 (ASKPSPGPKPAPKPSPGPKPAPKPSPGPKPSPGPS) shows a compositional bias: pro residues. Positions 407–649 (GGGGGGGNVS…KNVKISKWSP (243 aa)) are catalytic.

Requires Ca(2+) as cofactor. Mg(2+) is required as a cofactor.

It localises to the membrane. It is found in the virion. With respect to regulation, inhibited by Mn(2+), Cu(2+), Co(2+), Fe(2+), Zn(2+), Ni(2+), EDTA and EGTA. Functionally, during viral entry, involved in the degradation of the host cell wall at the site of attachment. The protein is Exolysin of Chlorella (PBCV-1).